Reading from the N-terminus, the 786-residue chain is Receptor-interacting serine/threonine-protein kinase 4 (786 aa).

A Protein kinase domain is found at 22–286; that stretch reads FAGWEKVGSG…QEITSETEDL (265 aa). Residues 28–36 and Lys-51 contribute to the ATP site; that span reads VGSGGFGQV. Residue Lys-51 forms a Glycyl lysine isopeptide (Lys-Gly) (interchain with G-Cter in ubiquitin) linkage. The active-site Proton acceptor is the Asp-143. Lys-145 is covalently cross-linked (Glycyl lysine isopeptide (Lys-Gly) (interchain with G-Cter in ubiquitin)). Disordered stretches follow at residues 293-328 and 347-378; these read EVKD…APPF and QTLE…GVSS. Residues 295-319 are compositionally biased toward basic and acidic residues; that stretch reads KDLAHEPGEKSSLESKSEARPESSR. Residues 357–378 are compositionally biased toward low complexity; the sequence is RSSSECKLPSSSSGKRLSGVSS. 10 ANK repeats span residues 439 to 468, 472 to 501, 505 to 534, 538 to 567, 571 to 601, 605 to 634, 638 to 667, 671 to 700, 704 to 734, and 736 to 765; these read SSAS…NPNL, KGST…SVNA, DQWT…SVNE, EGRT…DVGL, DAWL…SVNA, DGRT…DVNI, QAQT…GKEA, EGYT…DVMA, LNQT…DLSD, and QGLS…HINL.

This sequence belongs to the protein kinase superfamily. TKL Ser/Thr protein kinase family. In terms of assembly, interacts with PRKCB. Interacts with TRAF1, TRAF2, TRAF3 and TRAF5. Interacts with BIRC2/c-IAP1, BIRC3/c-IAP2 and XIAP/BIRC4. Post-translationally, may be phosphorylated by MAP3K2 and MAP3K3. Proteolytically cleaved by during Fas-induced apoptosis. Cleavage at Asp-342 and Asp-380. In terms of processing, polyubiquitinated with 'Lys-48' and 'Lys-63'-linked chains by BIRC2/c-IAP1 and BIRC3/c-IAP2, leading to activation of NF-kappa-B. As to expression, expressed in the epidermis of the skin (at protein level). Ubiquitously expressed, with an abundant expression in the thymus, bone marrow, pro-B, pre-B and immature B cells and a weak expression in the spleen.

The protein localises to the cytoplasm. Its subcellular location is the membrane. The catalysed reaction is L-seryl-[protein] + ATP = O-phospho-L-seryl-[protein] + ADP + H(+). It catalyses the reaction L-threonyl-[protein] + ATP = O-phospho-L-threonyl-[protein] + ADP + H(+). Functionally, serine/threonine protein kinase. Required for embryonic skin development and correct skin homeostasis in adults, via phosphorylation of PKP1 and subsequent promotion of keratinocyte differentiation and cell adhesion. It is a direct transcriptional target of TP63. Plays a role in NF-kappa-B activation. The polypeptide is Receptor-interacting serine/threonine-protein kinase 4 (Ripk4) (Mus musculus (Mouse)).